A 475-amino-acid chain; its full sequence is Lipid II flippase MurJ (475 aa).

The Cytoplasmic segment spans residues 1–2 (MS). Residues 3–23 (ILFSSILFSIATFFSRILGLF) traverse the membrane as a helical segment. The Periplasmic portion of the chain corresponds to 24-35 (RDVLFAKYFGVS). A helical membrane pass occupies residues 36–56 (YELDAYFIAIMFPFFLRKVFG). The Cytoplasmic portion of the chain corresponds to 57–78 (EGAMSSAFVPLYSEKSGEEKDK). Residues 79-99 (FLSSVINGFSLIILALVILSY) traverse the membrane as a helical segment. The Periplasmic segment spans residues 100–123 (FFPELIINLFGAGSSHETKILAKK). A helical transmembrane segment spans residues 124–144 (LLLITSPSIYFIFLWAISYSI). Over 145-150 (LNTNNK) the chain is Cytoplasmic. A helical membrane pass occupies residues 151 to 171 (FFWPALTPSISNITIIIGTFL). The Periplasmic portion of the chain corresponds to 172–175 (STKY). Residues 176–196 (GIISPTIGFLIGSILMFFSII) traverse the membrane as a helical segment. The Cytoplasmic segment spans residues 197–213 (KSIIKHKYYFTIKHFPH). A helical transmembrane segment spans residues 214–238 (FLKLFFPTFMTMVVSQINTVVDMNV). Residues 239–249 (VSFYDKGSISY) lie on the Periplasmic side of the membrane. A helical membrane pass occupies residues 250–271 (LQYASRFYLLPYGLFAVSVSTV). Topologically, residues 272–287 (VLSKISNDRKNFNYHL) are cytoplasmic. Residues 288 to 308 (NDALKTTLFFTIPSMVGLIFL) form a helical membrane-spanning segment. The Periplasmic portion of the chain corresponds to 309–332 (STPIIRFFYEHGAFTSKDTLITSK). The chain crosses the membrane as a helical span at residues 333–353 (ILIAYTLGLPFYGIYSTISRS). Over 354-362 (YHAIKNTKT) the chain is Cytoplasmic. A helical transmembrane segment spans residues 363 to 383 (PFIAATIVSLSNIILDIIFGL). Residues 384-386 (KYG) lie on the Periplasmic side of the membrane. Residues 387 to 407 (PIGVALATSIAGIIGVLYLLF) form a helical membrane-spanning segment. At 408–416 (SVKTFPIKD) the chain is on the cytoplasmic side. Residues 417–437 (FLKISLNSLIMLFVIYLTDFT) form a helical membrane-spanning segment. The Periplasmic portion of the chain corresponds to 438 to 440 (DNE). Residues 441–461 (FWFLIQILIGILVYLIFSSIF) traverse the membrane as a helical segment. At 462-475 (YRDLIRRFLYARKK) the chain is on the cytoplasmic side.

It belongs to the MurJ/MviN family.

The protein localises to the cell inner membrane. It functions in the pathway cell wall biogenesis; peptidoglycan biosynthesis. In terms of biological role, involved in peptidoglycan biosynthesis. Transports lipid-linked peptidoglycan precursors from the inner to the outer leaflet of the cytoplasmic membrane. The chain is Lipid II flippase MurJ from Thermosipho africanus (strain TCF52B).